Here is a 343-residue protein sequence, read N- to C-terminus: Phenylalanine--tRNA ligase alpha subunit (343 aa).

Position 268 (E268) interacts with Mg(2+).

The protein belongs to the class-II aminoacyl-tRNA synthetase family. Phe-tRNA synthetase alpha subunit type 1 subfamily. In terms of assembly, tetramer of two alpha and two beta subunits. Requires Mg(2+) as cofactor.

It localises to the cytoplasm. The catalysed reaction is tRNA(Phe) + L-phenylalanine + ATP = L-phenylalanyl-tRNA(Phe) + AMP + diphosphate + H(+). The protein is Phenylalanine--tRNA ligase alpha subunit of Cupriavidus taiwanensis (strain DSM 17343 / BCRC 17206 / CCUG 44338 / CIP 107171 / LMG 19424 / R1) (Ralstonia taiwanensis (strain LMG 19424)).